A 362-amino-acid chain; its full sequence is Innexin inx1 (362 aa).

At 1 to 28 the chain is on the cytoplasmic side; it reads MYKLLGSLKSYLKWQDIQTDNAVFRLHN. The helical transmembrane segment at 29-49 threads the bilayer; that stretch reads SFTTVLLLTCSLIITATQYVG. The Extracellular segment spans residues 50–110; sequence QPISCIVNGV…DAKKYYTYYQ (61 aa). The helical transmembrane segment at 111–131 threads the bilayer; it reads WVCFVLFFQAMACYTPKFLWN. Residues 132-177 are Cytoplasmic-facing; that stretch reads KFEGGLMRMIVMGLNITICTREEKEAKRDALLDYLIKHVKRHKLYA. Residues 178-198 traverse the membrane as a helical segment; that stretch reads IRYWACEFLCCINIIVQMYLM. The Extracellular segment spans residues 199–267; it reads NRFFDGEFLS…LPLNIVNEKT (69 aa). The chain crosses the membrane as a helical span at residues 268–288; it reads YVFIWFWFWILLVLLIGLIVF. At 289-362 the chain is on the cytoplasmic side; sequence RGCIIFMPKF…VEPSKHDRAK (74 aa).

This sequence belongs to the pannexin family. As to quaternary structure, heterooligomer of Inx2 and ogre. As to expression, in ovary, expressed in follicle cells. Expressed around the periphery of the embryo during cellular blastoderm formation. Repeating epidermal pattern emerges from stage 11, high levels of expression detected along the borders of each segment from stage 13. At stage 13, expressed in the dorsal branch of the tracheal system. During stage 15, detected in a few cells at each of the branch points of the dorsal trunk and at low levels in cardioblasts. In embryos, also expressed in the salivary gland and the hindgut (at protein level). At stage 17, expressed in the dorsal side of the CNS. Expressed in the imaginal wing disk. Expressed in larval CNS and in tissues outside of the CNS. In pupae, expressed in the CNS and in primary, secondary and tertiary pigment cells of the retina.

The protein resides in the cell membrane. It localises to the cell junction. The protein localises to the gap junction. Its subcellular location is the basolateral cell membrane. In terms of biological role, structural component of the gap junctions. Essential for generation and/or maintenance of postembryonic neuroblasts and normal development of optic lobe. The chain is Innexin inx1 (ogre) from Drosophila melanogaster (Fruit fly).